Consider the following 449-residue polypeptide: Trigger factor (449 aa).

The region spanning 173-258 is the PPIase FKBP-type domain; that stretch reads GDRVTLDFVG…LKKVEWAHLP (86 aa).

This sequence belongs to the FKBP-type PPIase family. Tig subfamily.

Its subcellular location is the cytoplasm. It carries out the reaction [protein]-peptidylproline (omega=180) = [protein]-peptidylproline (omega=0). Its function is as follows. Involved in protein export. Acts as a chaperone by maintaining the newly synthesized protein in an open conformation. Functions as a peptidyl-prolyl cis-trans isomerase. In Cupriavidus metallidurans (strain ATCC 43123 / DSM 2839 / NBRC 102507 / CH34) (Ralstonia metallidurans), this protein is Trigger factor.